Reading from the N-terminus, the 231-residue chain is MNSPSIHTIAPQNEQALLQRAQSLAGYNLAELADIALLPLPANLKRDKGWIGILLERFLGASAGSKPEQDFPEIGVELKTIPIDEQGKPLETTFVCVAPLTGNSGVTWESSHVRHKLARVLWIPVEGSRHIPLGERRIGTPLIWSPNDEEEEQLRCDWEELMDLIVLGRVESITARHGEVLQLRPKAANSRALTEAIGEFGQPILTLPRGFYLKKTFTAPLLARHFMQLSN.

Belongs to the MutH family.

It localises to the cytoplasm. Its function is as follows. Sequence-specific endonuclease that cleaves unmethylated GATC sequences. It is involved in DNA mismatch repair. The chain is DNA mismatch repair protein MutH from Pectobacterium atrosepticum (strain SCRI 1043 / ATCC BAA-672) (Erwinia carotovora subsp. atroseptica).